Reading from the N-terminus, the 194-residue chain is Small ribosomal subunit protein uS11m (194 aa).

This sequence belongs to the universal ribosomal protein uS11 family. As to quaternary structure, component of the mitochondrial small ribosomal subunit (mt-SSU). Mature mammalian 55S mitochondrial ribosomes consist of a small (28S) and a large (39S) subunit. The 28S small subunit contains a 12S ribosomal RNA (12S mt-rRNA) and 30 different proteins. The 39S large subunit contains a 16S rRNA (16S mt-rRNA), a copy of mitochondrial valine transfer RNA (mt-tRNA(Val)), which plays an integral structural role, and 52 different proteins.

The protein localises to the mitochondrion. The polypeptide is Small ribosomal subunit protein uS11m (MRPS11) (Homo sapiens (Human)).